The primary structure comprises 316 residues: Ornithine carbamoyltransferase (316 aa).

Residues 59–62 (STRT), Q86, R110, and 137–140 (HPCQ) contribute to the carbamoyl phosphate site. L-ornithine contacts are provided by residues N168, D232, and 236–237 (SM). Residues 273-274 (CL) and R301 contribute to the carbamoyl phosphate site.

The protein belongs to the aspartate/ornithine carbamoyltransferase superfamily. OTCase family.

The protein localises to the cytoplasm. It catalyses the reaction carbamoyl phosphate + L-ornithine = L-citrulline + phosphate + H(+). Its pathway is amino-acid biosynthesis; L-arginine biosynthesis; L-arginine from L-ornithine and carbamoyl phosphate: step 1/3. Functionally, reversibly catalyzes the transfer of the carbamoyl group from carbamoyl phosphate (CP) to the N(epsilon) atom of ornithine (ORN) to produce L-citrulline. The protein is Ornithine carbamoyltransferase (argF) of Listeria monocytogenes serovar 1/2a (strain ATCC BAA-679 / EGD-e).